Reading from the N-terminus, the 293-residue chain is Ribosomal protein L11 methyltransferase (293 aa).

Residues Thr145, Gly166, Asp188, and Asn230 each coordinate S-adenosyl-L-methionine.

This sequence belongs to the methyltransferase superfamily. PrmA family.

The protein localises to the cytoplasm. It carries out the reaction L-lysyl-[protein] + 3 S-adenosyl-L-methionine = N(6),N(6),N(6)-trimethyl-L-lysyl-[protein] + 3 S-adenosyl-L-homocysteine + 3 H(+). Functionally, methylates ribosomal protein L11. This Edwardsiella ictaluri (strain 93-146) protein is Ribosomal protein L11 methyltransferase.